The primary structure comprises 152 residues: Ribosome maturation factor RimP (152 aa).

Belongs to the RimP family.

It is found in the cytoplasm. Its function is as follows. Required for maturation of 30S ribosomal subunits. The protein is Ribosome maturation factor RimP of Yersinia pestis.